We begin with the raw amino-acid sequence, 89 residues long: Small ribosomal subunit protein uS15 (89 aa).

This sequence belongs to the universal ribosomal protein uS15 family. Part of the 30S ribosomal subunit. Forms a bridge to the 50S subunit in the 70S ribosome, contacting the 23S rRNA.

Its function is as follows. One of the primary rRNA binding proteins, it binds directly to 16S rRNA where it helps nucleate assembly of the platform of the 30S subunit by binding and bridging several RNA helices of the 16S rRNA. In terms of biological role, forms an intersubunit bridge (bridge B4) with the 23S rRNA of the 50S subunit in the ribosome. The sequence is that of Small ribosomal subunit protein uS15 from Polynucleobacter asymbioticus (strain DSM 18221 / CIP 109841 / QLW-P1DMWA-1) (Polynucleobacter necessarius subsp. asymbioticus).